Reading from the N-terminus, the 166-residue chain is Myosin regulatory light chain 2, ventricular/cardiac muscle isoform (166 aa).

Position 2 is a n,N,N-trimethylalanine (Ala-2). Phosphoserine; by MLCK is present on residues Ser-14 and Ser-15. Position 19 is a phosphoserine (Ser-19). 3 EF-hand domains span residues 24–59 (TQIQ…LGRV), 94–129 (DPEE…QAER), and 130–165 (FSKE…GEEK). Ca(2+) is bound by residues Asp-37, Asn-39, Asp-41, and Asp-48. Thr-52 carries the phosphothreonine modification.

In terms of assembly, myosin is a hexamer of 2 heavy chains and 4 light chains. Interacts with MYOC. N-terminus is methylated by METTL11A/NTM1. Post-translationally, phosphorylated by MYLK3 and MYLK2; promotes cardiac muscle contraction and function. Dephosphorylated by PPP1CB complexed to PPP1R12B. The phosphorylated form in adult is expressed as gradients across the heart from endocardium (low phosphorylation) to epicardium (high phosphorylation); regulates cardiac torsion and workload distribution. As to expression, abundantly expressed in both cardiac and slow skeletal muscle. In the adult heart, the phosphorylated form is highly expressed in epicardium and weakly in endocardium.

The protein resides in the cytoplasm. The protein localises to the myofibril. Its subcellular location is the sarcomere. It is found in the a band. Functionally, contractile protein that plays a role in heart development and function. Following phosphorylation, plays a role in cross-bridge cycling kinetics and cardiac muscle contraction by increasing myosin lever arm stiffness and promoting myosin head diffusion; as a consequence of the increase in maximum contraction force and calcium sensitivity of contraction force. These events altogether slow down myosin kinetics and prolong duty cycle resulting in accumulated myosins being cooperatively recruited to actin binding sites to sustain thin filament activation as a means to fine-tune myofilament calcium sensitivity to force. During cardiogenesis plays an early role in cardiac contractility by promoting cardiac myofibril assembly. The chain is Myosin regulatory light chain 2, ventricular/cardiac muscle isoform from Mus musculus (Mouse).